A 960-amino-acid polypeptide reads, in one-letter code: Semaphorin-6C (960 aa).

Residues 1–23 form the signal peptide; the sequence is MPRAPHSMPLLLLLLLSLPQAQT. At 24–635 the chain is on the extracellular side; that stretch reads AFPQDPIPLL…ASASRSIPIP (612 aa). In terms of domain architecture, Sema spans 29 to 515; that stretch reads PIPLLTSDLQ…FPGCIVYLSL (487 aa). Asn69 carries N-linked (GlcNAc...) asparagine glycosylation. 4 disulfides stabilise this stretch: Cys110-Cys120, Cys138-Cys147, Cys261-Cys372, and Cys286-Cys331. An N-linked (GlcNAc...) asparagine glycan is attached at Asn285. The N-linked (GlcNAc...) asparagine glycan is linked to Asn436. 4 disulfide bridges follow: Cys478–Cys509, Cys518–Cys536, Cys524–Cys569, and Cys528–Cys544. A disordered region spans residues 555–624; the sequence is VDLTGNQESM…HTQGVRRDLS (70 aa). The chain crosses the membrane as a helical span at residues 636–656; it reads LLLACVAAAFALGASVSGLLV. Residues 657–960 are Cytoplasmic-facing; it reads SCACRRANRR…PAPHGSHFNF (304 aa). Disordered stretches follow at residues 685-725, 745-792, and 806-960; these read LARL…SPPE, ASGG…PGQE, and HGPQ…HFNF. Low complexity predominate over residues 899-909; the sequence is RVPSGGPSRYS. The span at 922 to 935 shows a compositional bias: basic and acidic residues; it reads PDGHRGRSLKRVDV. Residues 940–952 are compositionally biased toward pro residues; the sequence is SPKPPLATPPQPA.

Belongs to the semaphorin family. Expressed in many regions of the developing nervous system, probably in neurons and their precursors, but also in nonneural tissue such as immature muscle and dermis. In adult, strong expression in the skeletal muscle and moderate expression in the brain, where cerebellum shows the highest expression. Also expressed in almost all areas of the CNS.

It localises to the cell membrane. Its function is as follows. Shows growth cone collapsing activity on dorsal root ganglion (DRG) neurons in vitro. May be a stop signal for the DRG neurons in their target areas, and possibly also for other neurons. May also be involved in the maintenance and remodeling of neuronal connections. The protein is Semaphorin-6C (Sema6c) of Rattus norvegicus (Rat).